Consider the following 602-residue polypeptide: tRNA uridine 5-carboxymethylaminomethyl modification enzyme MnmG (602 aa).

10–15 (GGGHAG) contacts FAD. Positions 217–242 (DPQPRGFTGRPGPRAAESPTWQTHTT) are disordered. Position 267-281 (267-281 (GPRYCPSIEDKVVRF)) interacts with NAD(+).

This sequence belongs to the MnmG family. Homodimer. Heterotetramer of two MnmE and two MnmG subunits. FAD serves as cofactor.

It is found in the cytoplasm. Its function is as follows. NAD-binding protein involved in the addition of a carboxymethylaminomethyl (cmnm) group at the wobble position (U34) of certain tRNAs, forming tRNA-cmnm(5)s(2)U34. This Deinococcus geothermalis (strain DSM 11300 / CIP 105573 / AG-3a) protein is tRNA uridine 5-carboxymethylaminomethyl modification enzyme MnmG.